Consider the following 284-residue polypeptide: Shikimate dehydrogenase (NADP(+)) (284 aa).

Shikimate is bound by residues 20–22 (SIS) and Ser67. Lys71 acts as the Proton acceptor in catalysis. NADP(+) is bound at residue Asp83. Residues Asn92 and Asp107 each contribute to the shikimate site. Residues 129–133 (GAGGA) and Ile227 contribute to the NADP(+) site. Tyr229 contacts shikimate. Residue Gly250 participates in NADP(+) binding.

The protein belongs to the shikimate dehydrogenase family. Homodimer.

The catalysed reaction is shikimate + NADP(+) = 3-dehydroshikimate + NADPH + H(+). The protein operates within metabolic intermediate biosynthesis; chorismate biosynthesis; chorismate from D-erythrose 4-phosphate and phosphoenolpyruvate: step 4/7. Its function is as follows. Involved in the biosynthesis of the chorismate, which leads to the biosynthesis of aromatic amino acids. Catalyzes the reversible NADPH linked reduction of 3-dehydroshikimate (DHSA) to yield shikimate (SA). This Streptococcus pneumoniae (strain 70585) protein is Shikimate dehydrogenase (NADP(+)).